A 239-amino-acid polypeptide reads, in one-letter code: Small ribosomal subunit protein uS3c (239 aa).

The region spanning 43–139 is the KH type-2 domain; sequence IKNYIQKNRK…RFNISIEKVK (97 aa). Positions 50-74 are disordered; it reads NRKKGSNRKIESDSSSEVITHNRKM.

The protein belongs to the universal ribosomal protein uS3 family. In terms of assembly, part of the 30S ribosomal subunit.

The protein localises to the plastid. Its subcellular location is the chloroplast. The chain is Small ribosomal subunit protein uS3c (rps3) from Triticum aestivum (Wheat).